The sequence spans 480 residues: Prostacyclin synthase (480 aa).

The chain crosses the membrane as a helical span at residues 1 to 21 (MMWTALLLVGLSILVIVLYGR). Substrate is bound by residues arginine 104, leucine 110, asparagine 277, 338-339 (TR), and arginine 362. Cysteine 421 serves as a coordination point for heme.

It belongs to the cytochrome P450 family. Requires heme as cofactor.

The protein resides in the endoplasmic reticulum membrane. It catalyses the reaction prostaglandin H2 = prostaglandin I2. The enzyme catalyses a hydroperoxyeicosatetraenoate = an oxoeicosatetraenoate + H2O. It carries out the reaction (15S)-hydroperoxy-(5Z,8Z,11Z,13E)-eicosatetraenoate = 15-oxo-(5Z,8Z,11Z,13E)-eicosatetraenoate + H2O. The catalysed reaction is (15S)-hydroperoxy-(5Z,8Z,11Z,13E)-eicosatetraenoate + AH2 = (15S)-hydroxy-(5Z,8Z,11Z,13E)-eicosatetraenoate + A + H2O. Functionally, catalyzes the isomerization of prostaglandin H2 to prostacyclin (= prostaglandin I2). In terms of biological role, catalyzes the biosynthesis and metabolism of eicosanoids. Catalyzes the isomerization of prostaglandin H2 to prostacyclin (= prostaglandin I2), a potent mediator of vasodilation and inhibitor of platelet aggregation. Additionally, displays dehydratase activity, toward hydroperoxyeicosatetraenoates (HPETEs), especially toward (15S)-hydroperoxy-(5Z,8Z,11Z,13E)-eicosatetraenoate (15(S)-HPETE). In Danio rerio (Zebrafish), this protein is Prostacyclin synthase.